A 303-amino-acid chain; its full sequence is Mitochondrial carrier homolog 2 (303 aa).

N-acetylalanine is present on Ala2. At 2 to 15 (ADAASQVLLGSGLT) the chain is on the mitochondrial intermembrane side. Solcar repeat units lie at residues 2-98 (ADAA…YQES) and 118-206 (DHVI…VNTY). A helical membrane pass occupies residues 16 to 36 (ILSQPLMYVKVLIQVGYEPLP). At 37–77 (PTIGRNIFGRQVCQLPGLFSYAQHIASIDGRRGLFTGLTPR) the chain is on the cytoplasmic side. The helical transmembrane segment at 78-92 (LCSGVLGTVVHGKVL) threads the bilayer. Topologically, residues 93–135 (QHYQESDKGEELGPGNVQKEVSSSFDHVIKETTREMIARSAAT) are mitochondrial intermembrane. The helical transmembrane segment at 136 to 156 (LITHPFHVITLRSMVQFIGRE) threads the bilayer. Residues 157–180 (SKYCGLCDSIITIYREEGILGFFA) lie on the Cytoplasmic side of the membrane. Residues 181-199 (GLVPRLLGDILSLWLCNSL) form a helical membrane-spanning segment. The Mitochondrial intermembrane portion of the chain corresponds to 200 to 231 (AYLVNTYALDSGVSTMNEMKSYSQAVTGFFAS). A helical membrane pass occupies residues 232–252 (MLTYPFVLVSNLMAVNNCGLA). Over 253–280 (GGCPPYSPIYTSWIDCWCMLQKEGNMSR) the chain is Cytoplasmic. Residues 281-303 (GNSLFFRKVPFGKTYCCDLKMLI) traverse the membrane as a helical segment.

The protein belongs to the mitochondrial carrier (TC 2.A.29) family. As to quaternary structure, interacts with p15BID.

The protein localises to the mitochondrion outer membrane. In terms of biological role, protein insertase that mediates insertion of transmembrane proteins into the mitochondrial outer membrane. Catalyzes insertion of proteins with alpha-helical transmembrane regions, such as signal-anchored, tail-anchored and multi-pass membrane proteins. Does not mediate insertion of beta-barrel transmembrane proteins. Also acts as a receptor for the truncated form of pro-apoptotic BH3-interacting domain death agonist (p15 BID) and has therefore a critical function in apoptosis. Regulates the quiescence/cycling of hematopoietic stem cells (HSCs). Acts as a regulator of mitochondrial fusion, essential for the naive-to-primed interconversion of embryonic stem cells (ESCs). Acts as a regulator of lipid homeostasis and has a regulatory role in adipocyte differentiation and biology. This chain is Mitochondrial carrier homolog 2, found in Homo sapiens (Human).